A 742-amino-acid chain; its full sequence is Phosphoribosylformylglycinamidine synthase subunit PurL (742 aa).

Residue His53 is part of the active site. Residues Tyr56 and Lys95 each coordinate ATP. Glu97 contributes to the Mg(2+) binding site. Residues Ser98–His101 and Arg120 each bind substrate. Catalysis depends on His99, which acts as the Proton acceptor. Asp121 serves as a coordination point for Mg(2+). Position 244 (Gln244) interacts with substrate. Asp274 contributes to the Mg(2+) binding site. Substrate is bound at residue Glu318–Gln320. Residues Asp501 and Gly538 each coordinate ATP. Mg(2+) is bound at residue Asn539. Ser541 is a binding site for substrate.

This sequence belongs to the FGAMS family. As to quaternary structure, monomer. Part of the FGAM synthase complex composed of 1 PurL, 1 PurQ and 2 PurS subunits.

It is found in the cytoplasm. The enzyme catalyses N(2)-formyl-N(1)-(5-phospho-beta-D-ribosyl)glycinamide + L-glutamine + ATP + H2O = 2-formamido-N(1)-(5-O-phospho-beta-D-ribosyl)acetamidine + L-glutamate + ADP + phosphate + H(+). Its pathway is purine metabolism; IMP biosynthesis via de novo pathway; 5-amino-1-(5-phospho-D-ribosyl)imidazole from N(2)-formyl-N(1)-(5-phospho-D-ribosyl)glycinamide: step 1/2. Its function is as follows. Part of the phosphoribosylformylglycinamidine synthase complex involved in the purines biosynthetic pathway. Catalyzes the ATP-dependent conversion of formylglycinamide ribonucleotide (FGAR) and glutamine to yield formylglycinamidine ribonucleotide (FGAM) and glutamate. The FGAM synthase complex is composed of three subunits. PurQ produces an ammonia molecule by converting glutamine to glutamate. PurL transfers the ammonia molecule to FGAR to form FGAM in an ATP-dependent manner. PurS interacts with PurQ and PurL and is thought to assist in the transfer of the ammonia molecule from PurQ to PurL. In Limosilactobacillus reuteri (strain DSM 20016) (Lactobacillus reuteri), this protein is Phosphoribosylformylglycinamidine synthase subunit PurL.